Reading from the N-terminus, the 548-residue chain is mRNA cleavage and polyadenylation factor CLP1 (548 aa).

ATP contacts are provided by residues Glu-19, Lys-60, and 123–128 (SSGKTT). Over residues 437–478 (ESEVKEEVKEEKNEKDGEIKQDGEGEKKGEGKGEGEGEGEGK) the composition is skewed to basic and acidic residues. The segment at 437-500 (ESEVKEEVKE…DEEEVPFREE (64 aa)) is disordered. Residues 479–494 (DGEEEGEAEGEDDEEE) show a composition bias toward acidic residues.

This sequence belongs to the Clp1 family. Clp1 subfamily. In terms of assembly, component of a pre-mRNA cleavage factor complex. Interacts directly with PCF11.

The protein localises to the nucleus. In terms of biological role, required for endonucleolytic cleavage during polyadenylation-dependent pre-mRNA 3'-end formation. In Cryptococcus neoformans var. neoformans serotype D (strain JEC21 / ATCC MYA-565) (Filobasidiella neoformans), this protein is mRNA cleavage and polyadenylation factor CLP1.